A 511-amino-acid polypeptide reads, in one-letter code: Vesicular acetylcholine transporter (511 aa).

Topologically, residues 1-36 are cytoplasmic; the sequence is MVVGQAKAAMGKISSAIGERSKRISGAMNEPLRKRK. A helical transmembrane segment spans residues 37–57; it reads ILLVIVCIAMLLDNMLYMVIV. The Lumenal, vesicle segment spans residues 58 to 108; sequence PIVPNYLETIRTYKLVYITIPSNGTNGSLLNSTQRAVLERNPNANEDIQIG. Asparagine 80, asparagine 83, and asparagine 88 each carry an N-linked (GlcNAc...) asparagine glycan. A helical transmembrane segment spans residues 109 to 129; the sequence is VLFASKAILQLLSNPFTGTFI. Over 130-135 the chain is Cytoplasmic; that stretch reads DRVGYD. A helical membrane pass occupies residues 136–156; that stretch reads IPLLIGLTIMFFSTITFAFGE. Topologically, residues 157-165 are lumenal, vesicle; sequence SYAILFAAR. The chain crosses the membrane as a helical span at residues 166–186; it reads SLQGLGSAFADTSGIAMIADK. Topologically, residues 187-197 are cytoplasmic; the sequence is YTEESERTQAL. The chain crosses the membrane as a helical span at residues 198 to 218; it reads GIALAFISFGSLVAPPFGGVL. The Lumenal, vesicle portion of the chain corresponds to 219-225; it reads YQFAGKW. Residues 226 to 246 traverse the membrane as a helical segment; the sequence is VPFLVLSFVCLLDGILLLMVV. Topologically, residues 247-267 are cytoplasmic; that stretch reads TPFASRTRGNTLQGTPIHKLM. Residues 268–288 form a helical membrane-spanning segment; that stretch reads IDPYIAVVAGALTTCNIPLAF. Residues 289–306 lie on the Lumenal, vesicle side of the membrane; sequence LEPTISNWMKKTMNASEW. A glycan (N-linked (GlcNAc...) asparagine) is linked at asparagine 302. A helical transmembrane segment spans residues 307–327; the sequence is QMGITWLPAFFPHILGVYITV. Residues 328–337 lie on the Cytoplasmic side of the membrane; sequence KLAAKYPNYQ. Residues 338–358 form a helical membrane-spanning segment; the sequence is WLYGAFGLVIIGVSSCTIPAC. Residues 359–363 are Lumenal, vesicle-facing; it reads RNFEE. Residues 364–384 traverse the membrane as a helical segment; sequence LIIPLCALCFGIALVDTALLP. The Cytoplasmic segment spans residues 385–400; the sequence is TLAFLVDIRYVSVYGS. A helical membrane pass occupies residues 401-421; it reads VYAIADISYSVAYALGPIMAG. Over 422–428 the chain is Lumenal, vesicle; that stretch reads QIVHDLG. Residues 429-449 form a helical membrane-spanning segment; the sequence is FVQLNLGMGLVNILYAPALLF. Residues 450–511 are Cytoplasmic-facing; it reads LRNVCQMKPS…VLSDQEGYSE (62 aa). Residues 486 to 511 are disordered; the sequence is AKEPHGTSSGNHSVHAVLSDQEGYSE.

It belongs to the major facilitator superfamily. Vesicular transporter family. As to expression, high expression in the electric lobe of the brain.

Its subcellular location is the membrane. Involved in acetylcholine transport into synaptic vesicles. In Torpedo torpedo (Common torpedo), this protein is Vesicular acetylcholine transporter.